We begin with the raw amino-acid sequence, 89 residues long: Cell division topological specificity factor (89 aa).

It belongs to the MinE family.

Functionally, prevents the cell division inhibition by proteins MinC and MinD at internal division sites while permitting inhibition at polar sites. This ensures cell division at the proper site by restricting the formation of a division septum at the midpoint of the long axis of the cell. This is Cell division topological specificity factor from Sodalis glossinidius (strain morsitans).